The chain runs to 677 residues: Zinc finger protein 526 (677 aa).

3 C2H2-type zinc fingers span residues 57 to 79 (FMCSECGNLYNTLEEVLSHQEQH), 109 to 131 (FQCGECSQLILSPRELLAHQDAH), and 141 to 164 (YQCGDCQELFPSPELWVAHRKAQH). A disordered region spans residues 167-190 (TAAAKPPVPPPLPPVTPPPPPPAP). Over residues 172-190 (PPVPPPLPPVTPPPPPPAP) the composition is skewed to pro residues. The C2H2-type 4 zinc finger occupies 198-220 (YECPECSTLCTTPEEFLEHQGTH). Residues 223–232 (SLEKEEHNGL) are compositionally biased toward basic and acidic residues. A disordered region spans residues 223–300 (SLEKEEHNGL…RRASHGPASA (78 aa)). The segment covering 233-257 (EEEEEDDEDDNEETEEEEEAAAEVG) has biased composition (acidic residues). C2H2-type zinc fingers lie at residues 304-326 (FYCSQCQRSFSSANRLLAHGRAH), 331-353 (HECTTCSKVFKKAASLEQHLRLH), 359-381 (YLCVDCGRGFGTELTLVAHRRAH), and 387-408 (HRCRCGKTFSNMTKFLYHRRTH). The interval 408–449 (HAGKSGAPPSAAPPTVASAVASLAPAEPTPPPPAPPTPPAQL) is disordered. Positions 410-433 (GKSGAPPSAAPPTVASAVASLAPA) are enriched in low complexity. The span at 434 to 449 (EPTPPPPAPPTPPAQL) shows a compositional bias: pro residues. 5 consecutive C2H2-type zinc fingers follow at residues 449-472 (LPCPQCPKSFASASRLSRHRRAVH), 479-501 (HRCGVCGKGFKKLVHVRNHLRTH), 507-529 (FQCHACGKTFASLANLSRHQLTH), 535-557 (YQCLDCGKRFTQSSNLQQHRRLH), and 580-602 (YYCGTCGRWFRAMAGLRLHQRVH). The tract at residues 608 to 627 (LTLQPPRSPPPAPPPPPEPQ) is disordered. Residues 613-626 (PRSPPPAPPPPPEP) show a composition bias toward pro residues.

The protein belongs to the krueppel C2H2-type zinc-finger protein family.

The protein localises to the nucleus. Its function is as follows. May be involved in transcriptional regulation. The polypeptide is Zinc finger protein 526 (ZNF526) (Bos taurus (Bovine)).